We begin with the raw amino-acid sequence, 366 residues long: Glucose 1-dehydrogenase 2 (366 aa).

Zn(2+) is bound at residue C39. S41 provides a ligand contact to substrate. Residues H66 and E67 each coordinate Zn(2+). 4 residues coordinate substrate: N90, E116, Q152, and D156. Q152 serves as a coordination point for Zn(2+). Residues N212–R214, F277–F279, L305–N307, and K354 contribute to the NADP(+) site. N307 lines the substrate pocket.

It belongs to the zinc-containing alcohol dehydrogenase family. Glucose 1-dehydrogenase subfamily. The cofactor is Zn(2+).

The catalysed reaction is D-glucose + NAD(+) = D-glucono-1,5-lactone + NADH + H(+). It catalyses the reaction D-glucose + NADP(+) = D-glucono-1,5-lactone + NADPH + H(+). Its function is as follows. Catalyzes the NAD(P)(+)-dependent oxidation of D-glucose to D-gluconate via gluconolactone. Can utilize both NAD(+) and NADP(+) as electron acceptor. Is involved in the degradation of glucose through a non-phosphorylative variant of the Entner-Doudoroff pathway. This chain is Glucose 1-dehydrogenase 2, found in Caldivirga maquilingensis (strain ATCC 700844 / DSM 13496 / JCM 10307 / IC-167).